Consider the following 308-residue polypeptide: Ribosomal RNA small subunit methyltransferase H (308 aa).

S-adenosyl-L-methionine contacts are provided by residues 32 to 34 (AGH), Asp-52, Phe-79, Asp-100, and Gln-107.

Belongs to the methyltransferase superfamily. RsmH family.

Its subcellular location is the cytoplasm. It catalyses the reaction cytidine(1402) in 16S rRNA + S-adenosyl-L-methionine = N(4)-methylcytidine(1402) in 16S rRNA + S-adenosyl-L-homocysteine + H(+). In terms of biological role, specifically methylates the N4 position of cytidine in position 1402 (C1402) of 16S rRNA. The protein is Ribosomal RNA small subunit methyltransferase H of Mycoplasma mycoides subsp. mycoides SC (strain CCUG 32753 / NCTC 10114 / PG1).